Here is a 382-residue protein sequence, read N- to C-terminus: Plasmid replication initiator protein TrfA (382 aa).

Residues 1-163 (MNRTFDRKAY…TARSALFTTR (163 aa)) are toxic in E.coli strain K12 / DH5-alpha; may be membrane-associated. Residues 246–265 (SRLQATAMGFTSDRVGHLES) constitute a DNA-binding region (H-T-H motif). The tract at residues 286 to 297 (VLIDEEIVVLFA) is hydrophobic region (HR); required for membrane association.

Forms a dimer in solution, binds DNA as a monomer. Both mononer and dimer of the short form interact with Hda (Dp).

The protein resides in the cell inner membrane. Required for initiation of plasmid DNA replication, along with host-derived DnaA and other host proteins. Both forms of the protein are capable of initiating plasmid replication in a number of Gram-negative bacteria. Binds to 8 17-base pair repeat sequences (iterons) in the RK2 minimal replication origin (oriV), opening the origin of replication. oriV opening does not absolutely require the presence of nucleotides; formation of open complex is somewhat enhanced by ATP or ATP gamma S, while DnaA or HU is required for full opening. In terms of biological role, also involved in plasmid copy number control, promoting intermolecular coupling of protein bound iterons at oriV, which inhibits replication initiation. This chain is Plasmid replication initiator protein TrfA (trfA), found in Escherichia coli.